The chain runs to 181 residues: Oligoribonuclease (181 aa).

In terms of domain architecture, Exonuclease spans 8 to 171 (LIWIDLEMTG…QDIQESIAEL (164 aa)). Residue Y129 is part of the active site.

It belongs to the oligoribonuclease family.

The protein resides in the cytoplasm. 3'-to-5' exoribonuclease specific for small oligoribonucleotides. This is Oligoribonuclease from Shewanella putrefaciens (strain CN-32 / ATCC BAA-453).